The following is a 316-amino-acid chain: Protoheme IX farnesyltransferase (316 aa).

A run of 9 helical transmembrane segments spans residues 28 to 48 (IIPLLLITTAAAMEIASKGQV), 50 to 70 (PLLLFLTLLGGTLAAAAAQTL), 99 to 119 (HALIFALVLASLSLALFVFFV), 122 to 142 (LSGFLAMTGIAFYMLIYTHLL), 150 to 170 (IVIGGAAGSIPPLVGWAAVTG), 178 to 198 (ILFAIIFLWTPPHFWALALMI), 223 to 243 (IWLYTLIVVPFTFLLIYPLAA), 244 to 264 (CGVVYGVAALVLGFVFLKKAW), and 293 to 313 (AMVIDSLPMTSHLIATIASLF).

Belongs to the UbiA prenyltransferase family. Protoheme IX farnesyltransferase subfamily.

Its subcellular location is the cell inner membrane. The enzyme catalyses heme b + (2E,6E)-farnesyl diphosphate + H2O = Fe(II)-heme o + diphosphate. The protein operates within porphyrin-containing compound metabolism; heme O biosynthesis; heme O from protoheme: step 1/1. Converts heme B (protoheme IX) to heme O by substitution of the vinyl group on carbon 2 of heme B porphyrin ring with a hydroxyethyl farnesyl side group. This Microcystis aeruginosa (strain NIES-843 / IAM M-2473) protein is Protoheme IX farnesyltransferase.